The primary structure comprises 338 residues: Ribosomal RNA small subunit methyltransferase H (338 aa).

S-adenosyl-L-methionine contacts are provided by residues 46 to 48, aspartate 63, phenylalanine 90, aspartate 106, and glutamine 113; that span reads GGY.

This sequence belongs to the methyltransferase superfamily. RsmH family.

The protein localises to the cytoplasm. It carries out the reaction cytidine(1402) in 16S rRNA + S-adenosyl-L-methionine = N(4)-methylcytidine(1402) in 16S rRNA + S-adenosyl-L-homocysteine + H(+). In terms of biological role, specifically methylates the N4 position of cytidine in position 1402 (C1402) of 16S rRNA. This chain is Ribosomal RNA small subunit methyltransferase H, found in Mesorhizobium japonicum (strain LMG 29417 / CECT 9101 / MAFF 303099) (Mesorhizobium loti (strain MAFF 303099)).